Reading from the N-terminus, the 469-residue chain is 3-isopropylmalate dehydratase large subunit (469 aa).

3 residues coordinate [4Fe-4S] cluster: cysteine 349, cysteine 410, and cysteine 413.

The protein belongs to the aconitase/IPM isomerase family. LeuC type 1 subfamily. In terms of assembly, heterodimer of LeuC and LeuD. [4Fe-4S] cluster is required as a cofactor.

It carries out the reaction (2R,3S)-3-isopropylmalate = (2S)-2-isopropylmalate. It functions in the pathway amino-acid biosynthesis; L-leucine biosynthesis; L-leucine from 3-methyl-2-oxobutanoate: step 2/4. In terms of biological role, catalyzes the isomerization between 2-isopropylmalate and 3-isopropylmalate, via the formation of 2-isopropylmaleate. The sequence is that of 3-isopropylmalate dehydratase large subunit from Aromatoleum aromaticum (strain DSM 19018 / LMG 30748 / EbN1) (Azoarcus sp. (strain EbN1)).